The following is a 117-amino-acid chain: MQKIVIVANGAPYGSESLFNSLRLAIALREQESNLDLRLFLMSDAVTAGLRGQKPGEGYNIQQMLEILTAQNVPVKLCKTCTDGRGISTLPLIDGVEIGTLVELAQWTLSADKVLTF.

It to M.jannaschii MJ0989. As to quaternary structure, homohexamer. The hexamer is formed by a dimer of trimers.

The chain is Protein YchN (ychN) from Escherichia coli O157:H7.